A 434-amino-acid polypeptide reads, in one-letter code: CCA tRNA nucleotidyltransferase 1, mitochondrial (434 aa).

The transit peptide at 1 to 41 (MLRCLYHWHRPVLNRRWSRLCLPKQYLFTMKLQSPEFQSLF) directs the protein to the mitochondrion. 2 residues coordinate ATP: Gly64 and Arg67. Residues Gly64 and Arg67 each coordinate CTP. Mg(2+) is bound by residues Asp77 and Asp79. Residues Arg151, Asp194, Arg197, Arg200, and Arg203 each contribute to the ATP site. CTP-binding residues include Arg151, Asp194, Arg197, Arg200, and Arg203. At Ser400 the chain carries Phosphoserine. N6-acetyllysine is present on Lys402.

This sequence belongs to the tRNA nucleotidyltransferase/poly(A) polymerase family. As to quaternary structure, monomer, and homodimer; disulfide-linked. Mg(2+) is required as a cofactor.

It localises to the mitochondrion. Its subcellular location is the cytoplasm. It is found in the nucleus. It catalyses the reaction a tRNA precursor + 2 CTP + ATP = a tRNA with a 3' CCA end + 3 diphosphate. The enzyme catalyses a tRNA with a 3' CCA end + 2 CTP + ATP = a tRNA with a 3' CCACCA end + 3 diphosphate. Nucleotidyltransferase that catalyzes the addition and repair of the essential 3'-terminal CCA sequence in tRNAs, which is necessary for the attachment of amino acids to the 3' terminus of tRNA molecules, using CTP and ATP as substrates. tRNA 3'-terminal CCA addition is required both for tRNA processing and repair. Promotes tRNA repair and recycling downstream of the ribosome-associated quality control (RQC) pathway by mediating addition of the tRNA 3'-terminal CCA following cleavage by ANKZF1 and repair by ELAC1. Also involved in tRNA surveillance by mediating tandem CCA addition to generate a CCACCA at the 3' terminus of unstable tRNAs and tRNA-like transcripts. While stable tRNAs receive only 3'-terminal CCA, unstable tRNAs beginning with GG are marked with CCACCA and rapidly degraded. The structural flexibility of RNA controls the choice between CCA versus CCACCA addition: following the first CCA addition cycle, nucleotide-binding to the active site triggers a clockwise screw motion, producing torque on the RNA. This ejects stable RNAs, whereas unstable RNAs are refolded while bound to the enzyme and subjected to a second CCA catalytic cycle. Its function is as follows. Adds 2 C residues (CC-) to the 3' terminus of tRNA molecules instead of a complete CCA end as isoform 1 does (in vitro). This Homo sapiens (Human) protein is CCA tRNA nucleotidyltransferase 1, mitochondrial.